The chain runs to 589 residues: uncharacterized protein (589 aa).

The RRM domain occupies 242–314; that stretch reads TALEVRNIPE…RFIKIFWYNP (73 aa). Disordered stretches follow at residues 322–348, 443–465, and 566–589; these read PKKFASHKSPTTSDSSNVESSEDVDPA, ESPAASNGSHHPYASGLPQRGTN, and TSMETGESNTSDNMNIEVEEGRWR. The residue at position 330 (serine 330) is a Phosphoserine. Residues 330–340 are compositionally biased toward low complexity; that stretch reads SPTTSDSSNVE. The residue at position 332 (threonine 332) is a Phosphothreonine. The residue at position 334 (serine 334) is a Phosphoserine. The segment covering 566 to 579 has biased composition (polar residues); the sequence is TSMETGESNTSDNM.

Its subcellular location is the nucleus. This is an uncharacterized protein from Schizosaccharomyces pombe (strain 972 / ATCC 24843) (Fission yeast).